The primary structure comprises 734 residues: Ribosomal biogenesis protein LAS1L (734 aa).

Positions 204-255 (EGIEEEDQEEDKNIVVDDITEQKPEPQDDGKSTESDVKADGDSKGSEEVDSH) are disordered. Residues 214–255 (DKNIVVDDITEQKPEPQDDGKSTESDVKADGDSKGSEEVDSH) are compositionally biased toward basic and acidic residues. Glycyl lysine isopeptide (Lys-Gly) (interchain with G-Cter in SUMO2) cross-links involve residues lysine 215 and lysine 226. 3 positions are modified to phosphoserine: serine 441, serine 523, and serine 560. The segment covering 547 to 561 (GSEAKAQQQEEQGSV) has biased composition (polar residues). The segment at 547–619 (GSEAKAQQQE…PFSTGQESPT (73 aa)) is disordered. Residues 563-575 (DVKEEEKEEKEVL) show a composition bias toward basic and acidic residues. The segment covering 578–605 (QVEEEEENDDQEEEEEDEDDEDDEEEDR) has biased composition (acidic residues). Serine 617 carries the post-translational modification Phosphoserine. An interaction with NOL9 region spans residues 636-655 (SAWQVSSEDVRWDTFPLGRM).

Belongs to the LAS1 family. As to quaternary structure, component of some MLL1/MLL complex, at least composed of the core components KMT2A/MLL1, ASH2L, HCFC1/HCF1, WDR5 and RBBP5, as well as the facultative components BACC1, CHD8, E2F6, HSP70, INO80C, KANSL1, LAS1L, MAX, MCRS1, MGA, KAT8/MOF, PELP1, PHF20, PRP31, RING2, RUVB1/TIP49A, RUVB2/TIP49B, SENP3, TAF1, TAF4, TAF6, TAF7, TAF9 and TEX10. Component of the 5FMC complex, at least composed of PELP1, LAS1L, TEX10, WDR18 and SENP3; the complex interacts with methylated CHTOP and ZNF148. Interacts with NOL9 to form an ITS2 pre-rRNA endonuclease-kinase complex.

It localises to the nucleus. Its subcellular location is the nucleolus. The protein resides in the nucleoplasm. It is found in the cytoplasm. Functionally, required for the synthesis of the 60S ribosomal subunit and maturation of the 28S rRNA. Functions as a component of the Five Friends of Methylated CHTOP (5FMC) complex; the 5FMC complex is recruited to ZNF148 by methylated CHTOP, leading to desumoylation of ZNF148 and subsequent transactivation of ZNF148 target genes. Required for the efficient pre-rRNA processing at both ends of internal transcribed spacer 2 (ITS2). The protein is Ribosomal biogenesis protein LAS1L (LAS1L) of Homo sapiens (Human).